Here is a 500-residue protein sequence, read N- to C-terminus: NAD(P)H-quinone oxidoreductase subunit 2 A, chloroplastic (500 aa).

13 helical membrane passes run Leu-14–Leu-34, Ile-47–Phe-67, Ile-89–Ile-109, Met-114–Cys-134, Phe-139–Tyr-159, Tyr-173–Gly-193, Pro-217–Ala-237, Trp-285–Ile-305, Met-313–Asp-333, Tyr-344–Leu-364, Ala-385–Phe-405, Leu-408–Leu-428, and Met-474–Ile-494.

The protein belongs to the complex I subunit 2 family. NDH is composed of at least 16 different subunits, 5 of which are encoded in the nucleus.

The protein resides in the plastid. Its subcellular location is the chloroplast thylakoid membrane. The enzyme catalyses a plastoquinone + NADH + (n+1) H(+)(in) = a plastoquinol + NAD(+) + n H(+)(out). The catalysed reaction is a plastoquinone + NADPH + (n+1) H(+)(in) = a plastoquinol + NADP(+) + n H(+)(out). Functionally, NDH shuttles electrons from NAD(P)H:plastoquinone, via FMN and iron-sulfur (Fe-S) centers, to quinones in the photosynthetic chain and possibly in a chloroplast respiratory chain. The immediate electron acceptor for the enzyme in this species is believed to be plastoquinone. Couples the redox reaction to proton translocation, and thus conserves the redox energy in a proton gradient. This chain is NAD(P)H-quinone oxidoreductase subunit 2 A, chloroplastic, found in Pelargonium hortorum (Common geranium).